Here is a 610-residue protein sequence, read N- to C-terminus: Prolactin receptor (610 aa).

The signal sequence occupies residues 1 to 19; sequence MPSALAFVLLVLNISLLKG. The Extracellular segment spans residues 20 to 229; sequence QSPPGKPEIH…EMPNDFTLKD (210 aa). Fibronectin type-III domains are found at residues 22–122 and 124–224; these read PPGK…IVEP and PPRN…MPND. Cys31 and Cys41 are oxidised to a cystine. Residue Asn54 is glycosylated (N-linked (GlcNAc...) asparagine). Cysteines 70 and 81 form a disulfide. N-linked (GlcNAc...) asparagine glycosylation is found at Asn99 and Asn127. Zn(2+) contacts are provided by Asp206 and His207. The WSXWS motif motif lies at 210 to 214; it reads WSRWS. The helical transmembrane segment at 230 to 253 threads the bilayer; that stretch reads TTVWIIVAILSAVICLIMVWAVAL. Over 254–610 the chain is Cytoplasmic; that stretch reads KGYSMMTCIF…DPTCFMHSFH (357 aa). The Box 1 motif signature appears at 262-270; sequence IFPPVPGPK. 3 disordered regions span residues 317-355, 458-482, and 564-584; these read DERL…HSLL, TGEE…TPWP, and AKKA…ASFT. A compositionally biased stretch (basic and acidic residues) spans 318–327; the sequence is ERLMPSHSKE. The segment covering 345–354 has biased composition (low complexity); the sequence is GHGSYDSHSL.

Belongs to the type I cytokine receptor family. Type 1 subfamily. In terms of assembly, interacts with SMARCA1. Interacts with NEK3 and VAV2 and this interaction is prolactin-dependent.

The protein resides in the membrane. Its function is as follows. This is a receptor for the anterior pituitary hormone prolactin. The protein is Prolactin receptor (Prlr) of Rattus norvegicus (Rat).